A 333-amino-acid chain; its full sequence is Homocysteine S-methyltransferase 2 (333 aa).

Positions 8 to 327 constitute a Hcy-binding domain; the sequence is SMKDFLKQTG…TTIRAIHKRL (320 aa). The Zn(2+) site is built by C245, C312, and C313.

Monomer. Requires Zn(2+) as cofactor. Expressed predominantly in roots. Expressed in rosette leaves, cauline leaves and developing seeds.

It carries out the reaction S-methyl-L-methionine + L-homocysteine = 2 L-methionine + H(+). In terms of biological role, catalyzes methyl transfer from S-methylmethionine (SMM) to adenosyl-L-homocysteine (AdoMet). SMM degradation (by HMT-1, HMT-2 and HMT-3) and biosynthesis (by MMT1) constitute the SMM cycle in plants, which is probably required to achieve short term control of AdoMet level. The sequence is that of Homocysteine S-methyltransferase 2 (HMT-2) from Arabidopsis thaliana (Mouse-ear cress).